The chain runs to 243 residues: Methylthioribulose-1-phosphate dehydratase (243 aa).

Residues 1–22 (MCPADQTVATNNNDHLVQSEDP) are disordered. Residues 7-16 (TVATNNNDHL) are compositionally biased toward polar residues. Cys-103 provides a ligand contact to substrate. Positions 120 and 122 each coordinate Zn(2+). Residue Glu-149 is the Proton donor/acceptor of the active site. A Zn(2+)-binding site is contributed by His-205.

This sequence belongs to the aldolase class II family. MtnB subfamily. Zn(2+) is required as a cofactor.

The protein localises to the cytoplasm. It catalyses the reaction 5-(methylsulfanyl)-D-ribulose 1-phosphate = 5-methylsulfanyl-2,3-dioxopentyl phosphate + H2O. It functions in the pathway amino-acid biosynthesis; L-methionine biosynthesis via salvage pathway; L-methionine from S-methyl-5-thio-alpha-D-ribose 1-phosphate: step 2/6. In terms of biological role, catalyzes the dehydration of methylthioribulose-1-phosphate (MTRu-1-P) into 2,3-diketo-5-methylthiopentyl-1-phosphate (DK-MTP-1-P). This chain is Methylthioribulose-1-phosphate dehydratase, found in Penicillium rubens (strain ATCC 28089 / DSM 1075 / NRRL 1951 / Wisconsin 54-1255) (Penicillium chrysogenum).